We begin with the raw amino-acid sequence, 341 residues long: Galactofuranose transporter permease protein YtfT (341 aa).

The Cytoplasmic portion of the chain corresponds to 1-25; sequence MMPQSLPDTTTPKRRFRWPTGMPQL. A helical transmembrane segment spans residues 26 to 46; that stretch reads VALLLVLLVDSLVAPHFWQVV. Residues 47 to 65 lie on the Periplasmic side of the membrane; sequence LQDGRLFGSPIDILNRAAP. A run of 2 helical transmembrane segments spans residues 66 to 86 and 87 to 107; these read VALLAIGMTLVIATGGIDLSV and GAVMAIAGATTAAMTVAGFSL. Position 108 (P108) is a topological domain, periplasmic. The chain crosses the membrane as a helical span at residues 109 to 129; that stretch reads IVLLSALGTGILAGLWNGILV. Residues 130-136 are Cytoplasmic-facing; that stretch reads AILKIQP. A helical membrane pass occupies residues 137-157; sequence FVATLILMVAGRGVAQLITAG. Over 158 to 174 the chain is Periplasmic; that stretch reads QIVTFNSPDLSWFGSGS. The helical transmembrane segment at 175–195 threads the bilayer; sequence LLFLPTPVIIAVLTLILFWLL. Topologically, residues 196 to 223 are cytoplasmic; that stretch reads TRKTALGMFIEAVGINIRAAKNAGVNTR. Residues 224 to 244 traverse the membrane as a helical segment; that stretch reads IIVMLTYVLSGLCAAIAGIIV. Over 245-255 the chain is Periplasmic; sequence AADIRGADANN. The helical transmembrane segment at 256–276 threads the bilayer; it reads AGLWLELDAILAVVIGGGSLM. The Cytoplasmic portion of the chain corresponds to 277–281; that stretch reads GGRFN. The next 2 helical transmembrane spans lie at 282-302 and 303-323; these read LLLSVVGALIIQGMNTGILLS and GFPPEMNQVVKAVVVLCVLIV. Residues 324-341 lie on the Cytoplasmic side of the membrane; sequence QSQRFISLIKGVRSRDKT.

This sequence belongs to the binding-protein-dependent transport system permease family. AraH/RbsC subfamily. The complex is composed of two ATP-binding proteins (YtfR), two transmembrane proteins (YtfT and YjfF) and a solute-binding protein (YtfQ).

Its subcellular location is the cell inner membrane. In terms of biological role, part of the ABC transporter complex YtfQRT-YjfF involved in galactofuranose transport. Probably responsible for the translocation of the substrate across the membrane. This chain is Galactofuranose transporter permease protein YtfT (ytfT), found in Escherichia coli (strain K12).